A 640-amino-acid chain; its full sequence is Dextranase (640 aa).

Positions 1–32 (MPGTGLGRLAKHVTAAAAVFLISTGAVLPAQA) are cleaved as a signal peptide.

This sequence belongs to the glycosyl hydrolase 49 family.

The protein resides in the secreted. It catalyses the reaction Endohydrolysis of (1-&gt;6)-alpha-D-glucosidic linkages in dextran.. The sequence is that of Dextranase from Arthrobacter globiformis.